We begin with the raw amino-acid sequence, 466 residues long: 3-isopropylmalate dehydratase large subunit (466 aa).

[4Fe-4S] cluster is bound by residues Cys-347, Cys-407, and Cys-410.

It belongs to the aconitase/IPM isomerase family. LeuC type 1 subfamily. As to quaternary structure, heterodimer of LeuC and LeuD. [4Fe-4S] cluster serves as cofactor.

It carries out the reaction (2R,3S)-3-isopropylmalate = (2S)-2-isopropylmalate. The protein operates within amino-acid biosynthesis; L-leucine biosynthesis; L-leucine from 3-methyl-2-oxobutanoate: step 2/4. Its function is as follows. Catalyzes the isomerization between 2-isopropylmalate and 3-isopropylmalate, via the formation of 2-isopropylmaleate. The chain is 3-isopropylmalate dehydratase large subunit from Shigella dysenteriae serotype 1 (strain Sd197).